Consider the following 393-residue polypeptide: PxcA-like protein (393 aa).

4 consecutive transmembrane segments (helical) span residues 173–193, 271–291, 306–326, and 354–374; these read FLIV…NLVF, IVNL…IIVF, FLAL…DMFV, and VYIF…LLIF.

This sequence belongs to the CemA family. PxcL subfamily.

The protein resides in the cell inner membrane. Its function is as follows. Together with PxcA, contributes to transient H(+) uptake following dark to light transition. Required for H(+) influx to activate the Calvin-Benson-Bassham cycle. May also be involved in CO(2) transport. This is PxcA-like protein from Synechocystis sp. (strain ATCC 27184 / PCC 6803 / Kazusa).